The chain runs to 720 residues: Polyribonucleotide nucleotidyltransferase (720 aa).

Residues Asp-487 and Asp-493 each coordinate Mg(2+). In terms of domain architecture, KH spans 554 to 613 (PRIETFKIPTDKIREVIGTGGKVIREIVEKTGAKVNIEDDGTVKVASSDGEAMKAAIKWI). The 69-residue stretch at 623–691 (GQIYDGTVVK…DRGKTRLSMK (69 aa)) folds into the S1 motif domain. Residues 692 to 720 (AVDQTTGEDLEAKQKAEGGAEAPREAAGE) are disordered. Over residues 701-720 (LEAKQKAEGGAEAPREAAGE) the composition is skewed to basic and acidic residues.

This sequence belongs to the polyribonucleotide nucleotidyltransferase family. Mg(2+) is required as a cofactor.

Its subcellular location is the cytoplasm. It catalyses the reaction RNA(n+1) + phosphate = RNA(n) + a ribonucleoside 5'-diphosphate. Functionally, involved in mRNA degradation. Catalyzes the phosphorolysis of single-stranded polyribonucleotides processively in the 3'- to 5'-direction. This Bradyrhizobium sp. (strain BTAi1 / ATCC BAA-1182) protein is Polyribonucleotide nucleotidyltransferase.